Consider the following 159-residue polypeptide: Endoribonuclease YbeY (159 aa).

Residues histidine 126, histidine 130, and histidine 136 each contribute to the Zn(2+) site.

The protein belongs to the endoribonuclease YbeY family. The cofactor is Zn(2+).

Its subcellular location is the cytoplasm. Its function is as follows. Single strand-specific metallo-endoribonuclease involved in late-stage 70S ribosome quality control and in maturation of the 3' terminus of the 16S rRNA. This chain is Endoribonuclease YbeY, found in Thermodesulfovibrio yellowstonii (strain ATCC 51303 / DSM 11347 / YP87).